The sequence spans 213 residues: Small ribosomal subunit protein uS3 (213 aa).

Residues 38–106 (IREYLENRLS…RVHINIVEIK (69 aa)) enclose the KH type-2 domain.

Belongs to the universal ribosomal protein uS3 family. As to quaternary structure, part of the 30S ribosomal subunit. Forms a tight complex with proteins S10 and S14.

Binds the lower part of the 30S subunit head. Binds mRNA in the 70S ribosome, positioning it for translation. In Oceanobacillus iheyensis (strain DSM 14371 / CIP 107618 / JCM 11309 / KCTC 3954 / HTE831), this protein is Small ribosomal subunit protein uS3.